We begin with the raw amino-acid sequence, 137 residues long: Large ribosomal subunit protein uL16 (137 aa).

Belongs to the universal ribosomal protein uL16 family. As to quaternary structure, part of the 50S ribosomal subunit.

Functionally, binds 23S rRNA and is also seen to make contacts with the A and possibly P site tRNAs. The sequence is that of Large ribosomal subunit protein uL16 from Bartonella quintana (strain Toulouse) (Rochalimaea quintana).